Reading from the N-terminus, the 153-residue chain is Large ribosomal subunit protein uL15 (153 aa).

The protein belongs to the universal ribosomal protein uL15 family. In terms of assembly, part of the 50S ribosomal subunit.

In terms of biological role, binds to the 23S rRNA. The polypeptide is Large ribosomal subunit protein uL15 (Pelagibacter ubique (strain HTCC1062)).